A 101-amino-acid chain; its full sequence is Large ribosomal subunit protein bL28 (101 aa).

It belongs to the bacterial ribosomal protein bL28 family.

This Rhodopseudomonas palustris (strain ATCC BAA-98 / CGA009) protein is Large ribosomal subunit protein bL28.